The chain runs to 306 residues: Protein YIPF1 (306 aa).

Residues M1–D119 lie on the Cytoplasmic side of the membrane. Residues N14–D62 form a disordered region. The span at A15–N29 shows a compositional bias: polar residues. The span at E50–D59 shows a compositional bias: acidic residues. Residues L120–L140 traverse the membrane as a helical segment. At S141–S162 the chain is on the lumenal side. The helical transmembrane segment at I163 to L183 threads the bilayer. Over M184–E200 the chain is Cytoplasmic. A helical membrane pass occupies residues I201–I221. Over P222 to R227 the chain is Lumenal. Residues W228–P248 form a helical membrane-spanning segment. Residues A249–R256 lie on the Cytoplasmic side of the membrane. A helical transmembrane segment spans residues V257 to L277. The Lumenal portion of the chain corresponds to A278–S306. An N-linked (GlcNAc...) asparagine glycan is attached at N297.

Belongs to the YIP1 family. In terms of assembly, interacts with YIPF6; this interaction may stabilize YIPF1. May also form a ternary complex with YIPF2 and YIPF6.

The protein resides in the golgi apparatus. It localises to the cis-Golgi network membrane. The protein localises to the trans-Golgi network membrane. Its subcellular location is the late endosome membrane. The polypeptide is Protein YIPF1 (YIPF1) (Pongo abelii (Sumatran orangutan)).